The following is a 418-amino-acid chain: Putative heat shock protein HSP 90-alpha A4 (418 aa).

Residues D33, K52, F78, and R204 each coordinate ATP. 2 disordered regions span residues E255–K289 and G383–K418. Over residues E265–Q274 the composition is skewed to basic and acidic residues.

The protein belongs to the heat shock protein 90 family. As to quaternary structure, homodimer.

The protein localises to the cytoplasm. Its function is as follows. Putative molecular chaperone that may promote the maturation, structural maintenance and proper regulation of specific target proteins. The chain is Putative heat shock protein HSP 90-alpha A4 (HSP90AA4P) from Homo sapiens (Human).